The chain runs to 182 residues: UPF0149 protein CGSHiEE_07975 (182 aa).

Belongs to the UPF0149 family.

The polypeptide is UPF0149 protein CGSHiEE_07975 (Haemophilus influenzae (strain PittEE)).